Here is a 353-residue protein sequence, read N- to C-terminus: MCGRTSCHLPRDALTRACAYLDRQGRRQLPQWRDPDKYCPSYNKSPQSSSPVLLSRLHFEKDADSSDRIIFPMRWGLVPSWFKESDPSKLQFNTSNCRSDTIMEKQSFKAPLGKGRRCVVLADGFYEWQRCQGTNQRQPYFIYFPQSKTEKSGENSGSDSLNNKEEVWDNWRLLTMAGIFDCWEPPKGERLYSYSIITVDSCRGLSDIHSRMPAILDGEEAVSKWLDFGEVSTQEALKLIHPIDNITFHPVSPVVNNSRNNTPECLAPADLLVKKEPKASGSSQRMMQWLATKSPKKEVPDSPKKDASGLPQWSSQFLQKSPLPTKRGASSSLLDRWLKQEKEDEPVAKRPNS.

C2 (nucleophile) is an active-site residue. Thiazolidine linkage to a ring-opened DNA abasic site is present on C2. The active site involves E127. Residues K148 and K151 each participate in a glycyl lysine isopeptide (Lys-Gly) (interchain with G-Cter in SUMO2) cross-link. Position 160 is a phosphoserine (S160). Glycyl lysine isopeptide (Lys-Gly) (interchain with G-Cter in SUMO2) cross-links involve residues K274 and K275. Residues 292-353 (TKSPKKEVPD…DEPVAKRPNS (62 aa)) form a disordered region. Position 294 is a phosphoserine (S294). Residues 295–307 (PKKEVPDSPKKDA) are compositionally biased toward basic and acidic residues. A Glycyl lysine isopeptide (Lys-Gly) (interchain with G-Cter in SUMO2) cross-link involves residue K305. S321 is modified (phosphoserine). The short motif at 332-338 (SLLDRWL) is the PIP-box element. Positions 336-353 (RWLKQEKEDEPVAKRPNS) are enriched in basic and acidic residues. Glycyl lysine isopeptide (Lys-Gly) (interchain with G-Cter in SUMO2) cross-links involve residues K339 and K342.

The protein belongs to the SOS response-associated peptidase family. In terms of assembly, interacts (via PIP-box motif) with PCNA. Post-translationally, ubiquitinated; the covalent HMCES DNA-protein cross-link is ubiquitinated, leading to its degradation by the proteasome.

Its subcellular location is the chromosome. With respect to regulation, formation and reversal of DNA-protein cross-link depends on DNA context. Catalyzes formation of the thiazolidine linkage in presence of abasic sites in single-stranded DNA. Mediates the reversal of the thiazolidine cross-link in presence of double stranded DNA. In terms of biological role, sensor of abasic sites in single-stranded DNA (ssDNA) required to preserve genome integrity by promoting error-free repair of abasic sites. Acts as an enzyme that recognizes and binds abasic sites in ssDNA at replication forks and chemically modifies the lesion by forming a covalent cross-link with DNA: forms a stable thiazolidine linkage between a ring-opened abasic site and the alpha-amino and sulfhydryl substituents of its N-terminal catalytic cysteine residue. Promotes error-free repair by protecting abasic sites from translesion synthesis (TLS) polymerases and endonucleases that are error-prone and would generate mutations and double-strand breaks. The HMCES DNA-protein cross-link is then either reversed or degraded. HMCES is able to catalyze the reversal of its thiazolidine cross-link and cycle between a cross-link and a non-cross-linked state depending on DNA context: mediates self-reversal of the thiazolidine cross-link in double stranded DNA, allowing APEX1 to initiate downstream repair of abasic sites. The HMCES DNA-protein cross-link can also be degraded by the SPRTN metalloprotease following unfolding by the BRIP1/FANCJ helicase. Has preference for ssDNA, but can also accommodate double-stranded DNA with 3' or 5' overhang (dsDNA), and dsDNA-ssDNA 3' junction. Plays a protective role during somatic hypermutation of immunoglobulin genes in B-cells: acts via its ability to form covalent cross-links with abasic sites, thereby limiting the accumulation of deletions in somatic hypermutation target regions. Also involved in class switch recombination (CSR) in B-cells independently of the formation of a DNA-protein cross-link: acts by binding and protecting ssDNA overhangs to promote DNA double-strand break repair through the microhomology-mediated alternative-end-joining (Alt-EJ) pathway. Acts as a protease: mediates autocatalytic processing of its N-terminal methionine in order to expose the catalytic cysteine. This chain is Abasic site processing protein HMCES, found in Rattus norvegicus (Rat).